The following is a 356-amino-acid chain: Phosphoribosylformylglycinamidine cyclo-ligase (356 aa).

It belongs to the AIR synthase family.

It is found in the cytoplasm. The catalysed reaction is 2-formamido-N(1)-(5-O-phospho-beta-D-ribosyl)acetamidine + ATP = 5-amino-1-(5-phospho-beta-D-ribosyl)imidazole + ADP + phosphate + H(+). The protein operates within purine metabolism; IMP biosynthesis via de novo pathway; 5-amino-1-(5-phospho-D-ribosyl)imidazole from N(2)-formyl-N(1)-(5-phospho-D-ribosyl)glycinamide: step 2/2. This Rhizobium meliloti (strain 1021) (Ensifer meliloti) protein is Phosphoribosylformylglycinamidine cyclo-ligase.